The following is a 600-amino-acid chain: Proline--tRNA ligase (600 aa).

This sequence belongs to the class-II aminoacyl-tRNA synthetase family. ProS type 1 subfamily. As to quaternary structure, homodimer.

It is found in the cytoplasm. The enzyme catalyses tRNA(Pro) + L-proline + ATP = L-prolyl-tRNA(Pro) + AMP + diphosphate. Its function is as follows. Catalyzes the attachment of proline to tRNA(Pro) in a two-step reaction: proline is first activated by ATP to form Pro-AMP and then transferred to the acceptor end of tRNA(Pro). As ProRS can inadvertently accommodate and process non-cognate amino acids such as alanine and cysteine, to avoid such errors it has two additional distinct editing activities against alanine. One activity is designated as 'pretransfer' editing and involves the tRNA(Pro)-independent hydrolysis of activated Ala-AMP. The other activity is designated 'posttransfer' editing and involves deacylation of mischarged Ala-tRNA(Pro). The misacylated Cys-tRNA(Pro) is not edited by ProRS. The sequence is that of Proline--tRNA ligase from Prochlorococcus marinus subsp. pastoris (strain CCMP1986 / NIES-2087 / MED4).